The following is a 317-amino-acid chain: Iron-uptake system-binding protein (317 aa).

An N-terminal signal peptide occupies residues 1-19 (MKKISLTLLILLLALTAAA). Cys20 is lipidated: N-palmitoyl cysteine. Cys20 carries the S-diacylglycerol cysteine lipid modification. Residues 57-317 (IAITGSVESM…KAAAEKLTQN (261 aa)) form the Fe/B12 periplasmic-binding domain.

This sequence belongs to the bacterial solute-binding protein 8 family. As to quaternary structure, the complex is composed of one ATP-binding protein (YusV), two transmembrane proteins (FeuB and FeuC) and a solute-binding protein (FeuA).

The protein resides in the cell membrane. The protein localises to the cytoplasm. It localises to the membrane raft. Functionally, involved in the uptake of iron. In terms of biological role, part of the ABC transporter complex FeuABC/YusV involved in import of the catecholate siderophores bacillibactin and enterobactin. This Bacillus subtilis (strain 168) protein is Iron-uptake system-binding protein (feuA).